Consider the following 335-residue polypeptide: Cytoskeleton protein RodZ (335 aa).

The Cytoplasmic segment spans residues methionine 1–glycine 111. In terms of domain architecture, HTH cro/C1-type spans leucine 19–leucine 71. Residues glutamine 30 to glutamate 49 constitute a DNA-binding region (H-T-H motif). A helical; Signal-anchor for type II membrane protein transmembrane segment spans residues tryptophan 112–tryptophan 132. The Periplasmic segment spans residues tryptophan 133 to glutamine 335. Over residues aspartate 148–leucine 164 the composition is skewed to polar residues. The interval aspartate 148–threonine 244 is disordered. 2 stretches are compositionally biased toward low complexity: residues aspartate 165–glutamine 205 and aspartate 217–aspartate 239.

This sequence belongs to the RodZ family.

It localises to the cell inner membrane. Functionally, cytoskeletal protein that is involved in cell-shape control through regulation of the length of the long axis. This Escherichia coli O6:H1 (strain CFT073 / ATCC 700928 / UPEC) protein is Cytoskeleton protein RodZ.